Here is a 332-residue protein sequence, read N- to C-terminus: Ketol-acid reductoisomerase (NADP(+)) (332 aa).

The KARI N-terminal Rossmann domain occupies 1–182 (MAVIYYDKDC…GSNRAGILET (182 aa)). Residues 25–28 (YGAQ) and 83–86 (DTSQ) each bind NADP(+). His-108 is an active-site residue. Position 134 (Gly-134) interacts with NADP(+). One can recognise a KARI C-terminal knotted domain in the interval 183–328 (TFAEETETDL…AELRSMMSWL (146 aa)). Mg(2+) is bound by residues Asp-191, Glu-195, Glu-227, and Glu-231. Position 252 (Ser-252) interacts with substrate.

Belongs to the ketol-acid reductoisomerase family. Mg(2+) serves as cofactor.

The catalysed reaction is (2R)-2,3-dihydroxy-3-methylbutanoate + NADP(+) = (2S)-2-acetolactate + NADPH + H(+). It carries out the reaction (2R,3R)-2,3-dihydroxy-3-methylpentanoate + NADP(+) = (S)-2-ethyl-2-hydroxy-3-oxobutanoate + NADPH + H(+). It functions in the pathway amino-acid biosynthesis; L-isoleucine biosynthesis; L-isoleucine from 2-oxobutanoate: step 2/4. Its pathway is amino-acid biosynthesis; L-valine biosynthesis; L-valine from pyruvate: step 2/4. Its function is as follows. Involved in the biosynthesis of branched-chain amino acids (BCAA). Catalyzes an alkyl-migration followed by a ketol-acid reduction of (S)-2-acetolactate (S2AL) to yield (R)-2,3-dihydroxy-isovalerate. In the isomerase reaction, S2AL is rearranged via a Mg-dependent methyl migration to produce 3-hydroxy-3-methyl-2-ketobutyrate (HMKB). In the reductase reaction, this 2-ketoacid undergoes a metal-dependent reduction by NADPH to yield (R)-2,3-dihydroxy-isovalerate. The protein is Ketol-acid reductoisomerase (NADP(+)) of Dehalococcoides mccartyi (strain CBDB1).